A 95-amino-acid chain; its full sequence is Small integral membrane protein 18 (95 aa).

A helical transmembrane segment spans residues 35 to 55 (CFVILLLFIFTVVSLVVLAFL).

The protein localises to the membrane. This chain is Small integral membrane protein 18 (SMIM18), found in Homo sapiens (Human).